The chain runs to 349 residues: Anthranilate phosphoribosyltransferase (349 aa).

Residues G82, 85–86, 92–95, 110–118, and S122 contribute to the 5-phospho-alpha-D-ribose 1-diphosphate site; these read GD, NVST, and KHGNRAVSG. Anthranilate is bound at residue G82. Residue S94 coordinates Mg(2+). N113 contributes to the anthranilate binding site. R168 contacts anthranilate. Residues D227 and E228 each coordinate Mg(2+).

It belongs to the anthranilate phosphoribosyltransferase family. Homodimer. Requires Mg(2+) as cofactor.

It catalyses the reaction N-(5-phospho-beta-D-ribosyl)anthranilate + diphosphate = 5-phospho-alpha-D-ribose 1-diphosphate + anthranilate. The protein operates within amino-acid biosynthesis; L-tryptophan biosynthesis; L-tryptophan from chorismate: step 2/5. Its function is as follows. Catalyzes the transfer of the phosphoribosyl group of 5-phosphorylribose-1-pyrophosphate (PRPP) to anthranilate to yield N-(5'-phosphoribosyl)-anthranilate (PRA). This chain is Anthranilate phosphoribosyltransferase, found in Pseudomonas syringae pv. tomato (strain ATCC BAA-871 / DC3000).